We begin with the raw amino-acid sequence, 126 residues long: Methylglyoxal synthase (126 aa).

The region spanning 1 to 126 (MEKKIALIAH…LIKGFEGLNT (126 aa)) is the MGS-like domain. Substrate is bound by residues His10, Lys14, 36-39 (TGTT), and 56-57 (SG). Residue Asp62 is the Proton donor/acceptor of the active site. Substrate is bound at residue His89.

The protein belongs to the methylglyoxal synthase family.

The catalysed reaction is dihydroxyacetone phosphate = methylglyoxal + phosphate. Functionally, catalyzes the formation of methylglyoxal from dihydroxyacetone phosphate. This chain is Methylglyoxal synthase, found in Borrelia garinii subsp. bavariensis (strain ATCC BAA-2496 / DSM 23469 / PBi) (Borreliella bavariensis).